A 160-amino-acid polypeptide reads, in one-letter code: Transcription elongation factor GreA (160 aa).

The stretch at 50–70 forms a coiled coil; sequence AAREQQSFNEGRIQELEAKLS.

This sequence belongs to the GreA/GreB family.

In terms of biological role, necessary for efficient RNA polymerase transcription elongation past template-encoded arresting sites. The arresting sites in DNA have the property of trapping a certain fraction of elongating RNA polymerases that pass through, resulting in locked ternary complexes. Cleavage of the nascent transcript by cleavage factors such as GreA or GreB allows the resumption of elongation from the new 3'terminus. GreA releases sequences of 2 to 3 nucleotides. In Legionella pneumophila (strain Corby), this protein is Transcription elongation factor GreA.